The primary structure comprises 339 residues: Phenylalanine--tRNA ligase alpha subunit (339 aa).

A Mg(2+)-binding site is contributed by Glu254.

It belongs to the class-II aminoacyl-tRNA synthetase family. Phe-tRNA synthetase alpha subunit type 1 subfamily. Tetramer of two alpha and two beta subunits. Mg(2+) serves as cofactor.

It is found in the cytoplasm. It catalyses the reaction tRNA(Phe) + L-phenylalanine + ATP = L-phenylalanyl-tRNA(Phe) + AMP + diphosphate + H(+). This Clostridium perfringens (strain SM101 / Type A) protein is Phenylalanine--tRNA ligase alpha subunit.